A 363-amino-acid chain; its full sequence is Protein-arginine kinase (363 aa).

The Phosphagen kinase C-terminal domain maps to 24 to 255 (IVLSSRIRLA…EQLIAQERAA (232 aa)). ATP contacts are provided by residues 27–31 (SSRIR), histidine 92, arginine 126, 177–181 (RASVM), and 208–213 (RGTYGE). The short motif at 338–343 (RDVRRA) is the RDXXRA motif of the pArg binding pocket involved in allosteric regulation element.

It belongs to the ATP:guanido phosphotransferase family. As to quaternary structure, homodimer. Dimerization is important for full catalytic activity.

It carries out the reaction L-arginyl-[protein] + ATP = N(omega)-phospho-L-arginyl-[protein] + ADP + H(+). With respect to regulation, appears to be allosterically activated by the binding of pArg-containing polypeptides to the pArg-binding pocket localized in the C-terminal domain of McsB. Functionally, catalyzes the specific phosphorylation of arginine residues in a large number of proteins. Is part of the bacterial stress response system, where it is involved in regulating the global heat shock repressor CtsR; phosphorylates arginine residues in the winged helix-turn-helix domain of CtsR, thereby preventing its binding to DNA and consequently inducing the expression of repressed genes. Protein arginine phosphorylation has a physiologically important role and is involved in the regulation of many critical cellular processes, such as protein homeostasis, motility, competence, and stringent and stress responses, by regulating gene expression and protein activity. Acts exclusively on Arg residues, since it cannot phosphorylate Tyr, Ser, Thr, His, Asp and Lys. Has no free arginine kinase activity. In Geobacillus stearothermophilus (Bacillus stearothermophilus), this protein is Protein-arginine kinase.